The primary structure comprises 98 residues: Large ribosomal subunit protein uL23 (98 aa).

It belongs to the universal ribosomal protein uL23 family. In terms of assembly, part of the 50S ribosomal subunit. Contacts protein L29, and trigger factor when it is bound to the ribosome.

Its function is as follows. One of the early assembly proteins it binds 23S rRNA. One of the proteins that surrounds the polypeptide exit tunnel on the outside of the ribosome. Forms the main docking site for trigger factor binding to the ribosome. The protein is Large ribosomal subunit protein uL23 of Clostridium botulinum (strain Eklund 17B / Type B).